The chain runs to 56 residues: Large ribosomal subunit protein bL32 (56 aa).

Basic residues predominate over residues 1-20; it reads MAVPKRRTSRSNTRSRRSQW. The disordered stretch occupies residues 1–24; sequence MAVPKRRTSRSNTRSRRSQWKAKV.

Belongs to the bacterial ribosomal protein bL32 family.

This Frankia casuarinae (strain DSM 45818 / CECT 9043 / HFP020203 / CcI3) protein is Large ribosomal subunit protein bL32.